The primary structure comprises 487 residues: Putative B3 domain-containing protein At1g78640 (487 aa).

DNA-binding regions (TF-B3) lie at residues 171 to 269 (RLLL…QQGT) and 379 to 474 (RLTL…LFRV).

It is found in the nucleus. This Arabidopsis thaliana (Mouse-ear cress) protein is Putative B3 domain-containing protein At1g78640.